Here is a 227-residue protein sequence, read N- to C-terminus: Ribosome-recycling factor, chloroplastic (227 aa).

The transit peptide at 1 to 34 directs the protein to the chloroplast; that stretch reads WTAAANYVKIKVGTGKFARKTVVLSQKRTGTLKC. Residues 167-212 are a coiled coil; it reads KVALRNIRRDAIKSYDKLEKEKKLSEDNVKDLSSDLQKVIDEYIKK.

It belongs to the RRF family.

It is found in the plastid. It localises to the chloroplast. In terms of biological role, responsible for the release of ribosomes from messenger RNA at the termination of chloroplastic protein biosynthesis. In Daucus carota (Wild carrot), this protein is Ribosome-recycling factor, chloroplastic (RRF).